Here is a 190-residue protein sequence, read N- to C-terminus: Guanylate kinase (190 aa).

Positions 8-188 (GRLVILAGPS…AVSAIKAVLL (181 aa)) constitute a Guanylate kinase-like domain. Position 15 to 22 (15 to 22 (GPSAVGKS)) interacts with ATP.

The protein belongs to the guanylate kinase family.

It localises to the cytoplasm. The enzyme catalyses GMP + ATP = GDP + ADP. Functionally, essential for recycling GMP and indirectly, cGMP. This chain is Guanylate kinase, found in Corynebacterium efficiens (strain DSM 44549 / YS-314 / AJ 12310 / JCM 11189 / NBRC 100395).